The sequence spans 776 residues: Transcriptional regulator QRICH1 (776 aa).

Met1 carries the N-acetylmethionine modification. A CARD domain is found at 6–48 (ENTISFEEYIRVKARSVPQHRMKEFLDSLASKGPEALQEFQQT). Disordered regions lie at residues 139–164 (IQGQAPQSAAPSIQTPSLQSPSPSQL) and 218–240 (ALSPPPSQQGSPREGERRVGTAS). The residue at position 345 (Ser345) is a Phosphoserine. Glycyl lysine isopeptide (Lys-Gly) (interchain with G-Cter in SUMO2) cross-links involve residues Lys353 and Lys358. Low complexity predominate over residues 419-429 (QQQPQQQTPQE). The tract at residues 419–441 (QQQPQQQTPQEQTPPPQQQQQQL) is disordered. At Ser464 the chain carries Phosphoserine.

It is found in the nucleus. The protein resides in the cytoplasm. It localises to the cell membrane. Functionally, transcriptional regulator that acts as a mediator of the integrated stress response (ISR) through transcriptional control of protein homeostasis under conditions of ER stress. Controls the outcome of the unfolded protein response (UPR) which is an ER-stress response pathway. ER stress induces QRICH1 translation by a ribosome translation re-initiation mechanism in response to EIF2S1/eIF-2-alpha phosphorylation, and stress-induced QRICH1 regulates a transcriptional program associated with protein translation, protein secretion-mediated proteotoxicity and cell death during the terminal UPR. May cooperate with ATF4 transcription factor signaling to regulate ER homeostasis which is critical for cell viability. Up-regulates CASP3/caspase-3 activity in epithelial cells under ER stress. Central regulator of proteotoxicity associated with ER stress-mediated inflammatory diseases in the intestines and liver. Involved in chondrocyte hypertrophy, a process required for normal longitudinal bone growth. The protein is Transcriptional regulator QRICH1 of Homo sapiens (Human).